A 90-amino-acid chain; its full sequence is MGEQSFVVHVWGQVQGVGFRYFTRERALQLGLRGYAYNLADGSVEILICGPEQGVQMMLGWLEHGPRTAEVTRMEYEEAPPPQKGGFHTN.

The region spanning 5-90 (SFVVHVWGQV…PPQKGGFHTN (86 aa)) is the Acylphosphatase-like domain. Active-site residues include R20 and N38.

Belongs to the acylphosphatase family.

The catalysed reaction is an acyl phosphate + H2O = a carboxylate + phosphate + H(+). The sequence is that of Acylphosphatase (acyP) from Aeromonas salmonicida (strain A449).